We begin with the raw amino-acid sequence, 377 residues long: Histone deacetylase 8 (377 aa).

The interval 14–324 (LPPVYIYSPE…WTYLTGVILG (311 aa)) is histone deacetylase. Residue S39 is modified to Phosphoserine. D101 contributes to the substrate binding site. The Proton acceptor role is filled by H143. G151 contributes to the substrate binding site. Positions 178, 180, and 267 each coordinate a divalent metal cation. Y306 is a substrate binding site.

It belongs to the histone deacetylase family. HD type 1 subfamily. Interacts with CBFA2T3. Interacts with phosphorylated SMG5/EST1B; this interaction protects SMG5 from ubiquitin-mediated degradation. Associates with alpha-SMA (smooth muscle alpha-actin). The cofactor is a divalent metal cation. Phosphorylated by PKA on serine 39. Phosphorylation reduces deacetylase activity observed preferentially on histones H3 and H4.

It localises to the nucleus. Its subcellular location is the chromosome. It is found in the cytoplasm. The catalysed reaction is N(6)-acetyl-L-lysyl-[histone] + H2O = L-lysyl-[histone] + acetate. It catalyses the reaction N(6)-acetyl-L-lysyl-[protein] + H2O = L-lysyl-[protein] + acetate. It carries out the reaction N(6)-(2E)-butenoyl-L-lysyl-[protein] + H2O = (2E)-2-butenoate + L-lysyl-[protein]. Its activity is inhibited by trichostatin A (TSA) and butyrate, 2 well known histone deacetylase inhibitors. histone deacetylase inhibitor. Functionally, histone deacetylase that catalyzes the deacetylation of lysine residues on the N-terminal part of the core histones (H2A, H2B, H3 and H4). Histone deacetylation gives a tag for epigenetic repression and plays an important role in transcriptional regulation, cell cycle progression and developmental events. Histone deacetylases act via the formation of large multiprotein complexes. Also involved in the deacetylation of cohesin complex protein SMC3 regulating release of cohesin complexes from chromatin. May play a role in smooth muscle cell contractility. In addition to protein deacetylase activity, also has protein-lysine deacylase activity: acts as a protein decrotonylase by mediating decrotonylation ((2E)-butenoyl) of histones. The protein is Histone deacetylase 8 (Hdac8) of Mus musculus (Mouse).